Reading from the N-terminus, the 423-residue chain is Glucose-1-phosphate adenylyltransferase (423 aa).

Alpha-D-glucose 1-phosphate contacts are provided by residues Y112, G177, E192 to K193, and S210.

The protein belongs to the bacterial/plant glucose-1-phosphate adenylyltransferase family. In terms of assembly, homotetramer.

The catalysed reaction is alpha-D-glucose 1-phosphate + ATP + H(+) = ADP-alpha-D-glucose + diphosphate. The protein operates within glycan biosynthesis; glycogen biosynthesis. In terms of biological role, involved in the biosynthesis of ADP-glucose, a building block required for the elongation reactions to produce glycogen. Catalyzes the reaction between ATP and alpha-D-glucose 1-phosphate (G1P) to produce pyrophosphate and ADP-Glc. In Rhodospirillum rubrum (strain ATCC 11170 / ATH 1.1.1 / DSM 467 / LMG 4362 / NCIMB 8255 / S1), this protein is Glucose-1-phosphate adenylyltransferase.